A 63-amino-acid polypeptide reads, in one-letter code: uncharacterized protein (63 aa).

The protein resides in the mitochondrion. This is an uncharacterized protein from Marchantia polymorpha (Common liverwort).